A 364-amino-acid polypeptide reads, in one-letter code: Aminomethyltransferase (364 aa).

This sequence belongs to the GcvT family. As to quaternary structure, the glycine cleavage system is composed of four proteins: P, T, L and H.

The enzyme catalyses N(6)-[(R)-S(8)-aminomethyldihydrolipoyl]-L-lysyl-[protein] + (6S)-5,6,7,8-tetrahydrofolate = N(6)-[(R)-dihydrolipoyl]-L-lysyl-[protein] + (6R)-5,10-methylene-5,6,7,8-tetrahydrofolate + NH4(+). Functionally, the glycine cleavage system catalyzes the degradation of glycine. The polypeptide is Aminomethyltransferase (Shewanella sediminis (strain HAW-EB3)).